The primary structure comprises 240 residues: Ribosomal RNA small subunit methyltransferase I (240 aa).

The protein belongs to the methyltransferase superfamily. RsmI family.

It is found in the cytoplasm. The catalysed reaction is cytidine(1402) in 16S rRNA + S-adenosyl-L-methionine = 2'-O-methylcytidine(1402) in 16S rRNA + S-adenosyl-L-homocysteine + H(+). In terms of biological role, catalyzes the 2'-O-methylation of the ribose of cytidine 1402 (C1402) in 16S rRNA. This is Ribosomal RNA small subunit methyltransferase I from Leptospira biflexa serovar Patoc (strain Patoc 1 / ATCC 23582 / Paris).